Here is a 272-residue protein sequence, read N- to C-terminus: Shikimate dehydrogenase (NADP(+)) (272 aa).

Shikimate is bound by residues 14 to 16 (SKS) and T61. K65 serves as the catalytic Proton acceptor. NADP(+) is bound at residue E77. The shikimate site is built by N86 and D102. NADP(+) contacts are provided by residues 126-130 (GAGGA), 149-154 (NRTASR), and M213. Shikimate is bound at residue Y215. G237 is an NADP(+) binding site.

Belongs to the shikimate dehydrogenase family. In terms of assembly, homodimer.

The catalysed reaction is shikimate + NADP(+) = 3-dehydroshikimate + NADPH + H(+). It functions in the pathway metabolic intermediate biosynthesis; chorismate biosynthesis; chorismate from D-erythrose 4-phosphate and phosphoenolpyruvate: step 4/7. Involved in the biosynthesis of the chorismate, which leads to the biosynthesis of aromatic amino acids. Catalyzes the reversible NADPH linked reduction of 3-dehydroshikimate (DHSA) to yield shikimate (SA). The polypeptide is Shikimate dehydrogenase (NADP(+)) (Salmonella choleraesuis (strain SC-B67)).